A 122-amino-acid chain; its full sequence is Large ribosomal subunit protein uL14 (122 aa).

The protein belongs to the universal ribosomal protein uL14 family. As to quaternary structure, part of the 50S ribosomal subunit. Forms a cluster with proteins L3 and L19. In the 70S ribosome, L14 and L19 interact and together make contacts with the 16S rRNA in bridges B5 and B8.

In terms of biological role, binds to 23S rRNA. Forms part of two intersubunit bridges in the 70S ribosome. The polypeptide is Large ribosomal subunit protein uL14 (Agrobacterium fabrum (strain C58 / ATCC 33970) (Agrobacterium tumefaciens (strain C58))).